The primary structure comprises 188 residues: Protein GrpE 2 (188 aa).

It belongs to the GrpE family. Homodimer.

It localises to the cytoplasm. Functionally, participates actively in the response to hyperosmotic and heat shock by preventing the aggregation of stress-denatured proteins, in association with DnaK and GrpE. It is the nucleotide exchange factor for DnaK and may function as a thermosensor. Unfolded proteins bind initially to DnaJ; upon interaction with the DnaJ-bound protein, DnaK hydrolyzes its bound ATP, resulting in the formation of a stable complex. GrpE releases ADP from DnaK; ATP binding to DnaK triggers the release of the substrate protein, thus completing the reaction cycle. Several rounds of ATP-dependent interactions between DnaJ, DnaK and GrpE are required for fully efficient folding. This is Protein GrpE 2 from Buchnera aphidicola subsp. Acyrthosiphon pisum (strain APS) (Acyrthosiphon pisum symbiotic bacterium).